A 519-amino-acid polypeptide reads, in one-letter code: MLAMHCARVCSVLMGCRTTTRALSIRSFPGVTLAQIDEEVAKLLELKAHLGGDDGKHQFVLKTAKGTRDYNPKQMAIREKVFNTIVSCFKRHGAETIDTPVFELKETLTGKYGEDSKLIYDLKDQGGELLSLRYDLTVPFARYLAMNKITNIKRYHIAKVYRRDNPAMTRGRYREFYQCDFDIAGQYDAMIPDAECLKIVHEILSELDLGDFRIKVNDRRILDGMFAVCGVPDNMFRTICSTVDKLDKLPWEAVKNEMVNEKGLSEEAADQIGVYVGMQGGMDLAERLLQDQKMCQSTQACAGLTDIKLLFSYLQLFQVTDKVVFDLSLARGLDYYTGIIYEAILTQAGVAPVAPETSNEAPTEECVTVGSVAGGGRYDGLVGMFDPKGRKVPCVGVSIGIERIFSIMEQKAEASTEKIRTTEVQVMVAAAQKNLLEERLRLITELWNAGIKAELMYKKSPKLLSQLQHCEESGIPLVAILGEQELKNGVVKLRNVATRDEVDISRADLIAEIKKRTSA.

Residues 135 to 137 (DLT), R162, Q178, D182, R331, and 335 to 336 (YY) contribute to the L-histidine site.

The protein belongs to the class-II aminoacyl-tRNA synthetase family. As to quaternary structure, homodimer.

It localises to the cytoplasm. The catalysed reaction is tRNA(His) + L-histidine + ATP = L-histidyl-tRNA(His) + AMP + diphosphate + H(+). In terms of biological role, catalyzes the ATP-dependent ligation of histidine to the 3'-end of its cognate tRNA, via the formation of an aminoacyl-adenylate intermediate (His-AMP). Plays a role in axon guidance. This is Histidine--tRNA ligase, cytoplasmic (hars1) from Takifugu rubripes (Japanese pufferfish).